We begin with the raw amino-acid sequence, 371 residues long: Opine oxidase subunit B (371 aa).

Heterodimer of a subunit A and a subunit B.

It participates in opine metabolism; octopine degradation. Functionally, oxidative cleavage of octopine into L-arginine and pyruvate. This Rhizobium meliloti (Ensifer meliloti) protein is Opine oxidase subunit B (ooxB).